The chain runs to 159 residues: U-actitoxin-Avd13b (159 aa).

The N-terminal stretch at 1 to 18 is a signal peptide; that stretch reads MKSIFLVFFAVCLVKAEA. The propeptide occupies 19–26; sequence GKGRKREP. Disulfide bonds link C33-C45 and C36-C52. A propeptide spanning residues 59–60 is cleaved from the precursor; that stretch reads EP. 2 cysteine pairs are disulfide-bonded: C67/C79 and C70/C86. Residues 93 to 94 constitute a propeptide that is removed on maturation; that stretch reads EP. 2 cysteine pairs are disulfide-bonded: C101–C113 and C104–C120. A propeptide spanning residues 127–128 is cleaved from the precursor; the sequence is EP. Intrachain disulfides connect C135–C147 and C138–C154.

This sequence belongs to the sea anemone BBH family.

The protein resides in the secreted. Its subcellular location is the nematocyst. In terms of biological role, inhibits ion channels. In Anemonia viridis (Snakelocks anemone), this protein is U-actitoxin-Avd13b.